A 974-amino-acid chain; its full sequence is Probable proton ATPase 1A (974 aa).

Over residues 1-23 the composition is skewed to basic and acidic residues; that stretch reads MSSKKYELDAAAFEDKPESHSDA. The interval 1-61 is disordered; that stretch reads MSSKKYELDA…ATDLLPPSKG (61 aa). The Cytoplasmic portion of the chain corresponds to 1–92; the sequence is MSSKKYELDA…KTPSWLIYVR (92 aa). Residues 93–112 form a helical membrane-spanning segment; sequence GLWGPMPAALWIAIIIEFAL. Topologically, residues 113-117 are extracellular; that stretch reads ENWPD. A helical transmembrane segment spans residues 118 to 137; it reads GAILFAIQIANATIGWYETI. The Cytoplasmic segment spans residues 138-264; the sequence is KAGDAVAALK…LGNIHVILRR (127 aa). A helical membrane pass occupies residues 265-286; it reads VMFSLCAISFMLCMCCFIYLLA. Over 287–294 the chain is Extracellular; sequence RFYETFRH. Residues 295 to 321 form a helical membrane-spanning segment; the sequence is ALQFAVVVLVVSIPIALEIVVTTTLAV. The Cytoplasmic segment spans residues 322 to 630; that stretch reads GSKHLSKHKI…AVHGATDAAR (309 aa). Residue D351 is the 4-aspartylphosphate intermediate of the active site. Mg(2+)-binding residues include D605 and D609. The helical transmembrane segment at 631-651 threads the bilayer; that stretch reads AAADMVLTEPGLSVVVEAMLV. Residues 652-661 are Extracellular-facing; the sequence is SREVFQRMLS. The helical transmembrane segment at 662–684 threads the bilayer; sequence FLTYRISATLQLVCFFFIACFSL. At 685–697 the chain is on the cytoplasmic side; sequence TPKAYGSVDPHFQ. A helical membrane pass occupies residues 698-712; that stretch reads FFHLPVLMFMLITLL. Residues 713 to 737 are Extracellular-facing; the sequence is NDGCLMTIGYDHVIPSERPQKWNLP. D714 contacts Mg(2+). The chain crosses the membrane as a helical span at residues 738–761; that stretch reads VVFVSASILAAVACGSSLMLLWIG. Residues 762 to 812 lie on the Cytoplasmic side of the membrane; that stretch reads LEGYSSQYYENSWFHRLGLAQLPQGKLVTMMYLKISISDFLTLFSSRTGGH. A helical membrane pass occupies residues 813–840; it reads FFFYMPPSPILFCGAIISLLVSTMAASF. Over 841 to 868 the chain is Extracellular; sequence WHKSRPDNVLTEGLAWGQTNAEKLLPLW. A helical transmembrane segment spans residues 869–887; it reads VWIYCIVWWFVQDVVKVLA. Residues 888 to 974 are Cytoplasmic-facing; sequence HICMDAVDLF…VNVYVSRDQK (87 aa). The span at 950 to 959 shows a compositional bias: basic and acidic residues; it reads GLREDTHSPI. The segment at 950–974 is disordered; that stretch reads GLREDTHSPIEEASPVNVYVSRDQK.

The protein belongs to the cation transport ATPase (P-type) (TC 3.A.3) family. Type IIIA subfamily.

The protein resides in the membrane. The enzyme catalyses ATP + H2O + H(+)(in) = ADP + phosphate + 2 H(+)(out). The protein is Probable proton ATPase 1A (H1A) of Leishmania donovani.